The chain runs to 425 residues: Inhibin beta A chain (425 aa).

The first 20 residues, 1–20 (MPLLWLRGFLLASCWIIVRS), serve as a signal peptide directing secretion. Residues 21–309 (SPTPGSEGHS…EDHPHRRRRR (289 aa)) constitute a propeptide that is removed on maturation. Asn-165 is a glycosylation site (N-linked (GlcNAc...) asparagine). Residues 260–289 (KKRKEEEGEGKKRDGEGGAGGDEEKEQSHR) are disordered. Over residues 263-275 (KEEEGEGKKRDGE) the composition is skewed to basic and acidic residues. 4 cysteine pairs are disulfide-bonded: Cys-313–Cys-321, Cys-320–Cys-390, Cys-349–Cys-422, and Cys-353–Cys-424.

It belongs to the TGF-beta family. In terms of assembly, dimeric, linked by one or more disulfide bonds. Inhibin A is a dimer of alpha/INHA and beta-A/INHBA. Activin A is a homodimer of beta-A/INHBA. Activin AB is a dimer of beta-A/INHBA and beta-B/INHBB. Interacts with FST and FSTL3; these interactions prevent activin A interaction to its type II receptor. Activin A interacts with ACVR2A. Activin A interacts with BMPR2. Inhibin A interacts with ACVR1; this interaction creates a non-signaling complex (NSC) that inhibits ACVR1-mediated BMP signaling. Inhibin A interacts with ACVR2A.

Its subcellular location is the secreted. Functionally, inhibins/activins are involved in regulating a number of diverse functions such as hypothalamic and pituitary hormone secretion, gonadal hormone secretion, germ cell development and maturation, erythroid differentiation, insulin secretion, nerve cell survival, embryonic axial development or bone growth, depending on their subunit composition. In terms of biological role, activin A is a homodimer of INHBA that plays a role in several essential biological processes including embryonic development, stem cell maintenance and differentiation, haematopoiesis, cell proliferation and tissue fibrosis. Signals through type I (such as ACVR1B or ACVR1C) and type II receptors (such as ACVR2A, ACVR2B or BMPR2) which, upon ligand binding, phosphorylate SMAD2 and SMAD3 intracellular signaling mediators that form a complex with SMAD4, translocate to the nucleus and modulate gene expression. Can also activate alternative non-canonical intracellular signaling pathways including the p38 MAPK, extracellular signal-regulated kinases 1/2 (ERK1/2) and c-Jun N-terminal kinases (JNKs) to modulate cell migration and differentiation. Alternatively, promotes osteoblastic differentiation via ACVRL1-SMAD1/5/9 pathway. In addition, can engage the type I receptor ACVR1 to form an ACVR1-activin A-type II receptor non-signaling complex (NSC) that renders receptors unavailable for engagement with BMPs, hence resulting in an apparent inhibition of ACVR1-mediated BMP signaling. Inhibin A is a dimer of alpha/INHA and beta-A/INHBA that functions as a feedback regulator in the hypothalamic-pituitary-gonadal (HPG) axis. Inhibits the secretion of FSH from the anterior pituitary gland by acting on pituitary gonadotrope cells. Antagonizes activin A by binding to the proteoglycan, betaglycan, and forming a stable complex with and, thereby, sequestering type II activin receptors while excluding type I receptor. In Ovis aries (Sheep), this protein is Inhibin beta A chain (INHBA).